The chain runs to 216 residues: Ribose-5-phosphate isomerase A (216 aa).

Residues 26–29 (TGST), 79–82 (DGAD), and 92–95 (KGGG) contribute to the substrate site. E101 acts as the Proton acceptor in catalysis. K119 contacts substrate.

It belongs to the ribose 5-phosphate isomerase family. As to quaternary structure, homodimer.

It carries out the reaction aldehydo-D-ribose 5-phosphate = D-ribulose 5-phosphate. The protein operates within carbohydrate degradation; pentose phosphate pathway; D-ribose 5-phosphate from D-ribulose 5-phosphate (non-oxidative stage): step 1/1. In terms of biological role, catalyzes the reversible conversion of ribose-5-phosphate to ribulose 5-phosphate. This Legionella pneumophila subsp. pneumophila (strain Philadelphia 1 / ATCC 33152 / DSM 7513) protein is Ribose-5-phosphate isomerase A.